Consider the following 238-residue polypeptide: Riboflavin-binding protein (238 aa).

An N-terminal signal peptide occupies residues 1-17 (MLRFAITLFAVITSSTC). The residue at position 18 (Gln18) is a Pyrrolidone carboxylic acid. Intrachain disulfides connect Cys22–Cys49, Cys41–Cys90, Cys50–Cys94, Cys74–Cys155, Cys81–Cys127, Cys116–Cys186, Cys120–Cys169, Cys133–Cys151, and Cys184–Cys219. Asn53 is a glycosylation site (N-linked (GlcNAc...) asparagine). N-linked (GlcNAc...) asparagine glycosylation occurs at Asn164. Phosphoserine is present on residues Ser204, Ser205, Ser208, Ser209, Ser210, Ser212, Ser213, and Ser214.

This sequence belongs to the folate receptor family. Post-translationally, plasma and yolk RBPS have the same carbohydrate components, whereas egg-white RBP has a different, ovomucoid-type carbohydrate chain. Plasma RBP has the same C-terminal sequence as the egg-white RBP, which suggests that the C-terminal residues are cleaved off upon incorporation into the oocyte. As to expression, yolk RBP is synthesized in the liver; egg-white RBP is synthesized in the oviduct.

Its function is as follows. Required for the transport of riboflavin to the developing oocyte. The polypeptide is Riboflavin-binding protein (Gallus gallus (Chicken)).